The primary structure comprises 37 residues: Large ribosomal subunit protein bL36c (37 aa).

This sequence belongs to the bacterial ribosomal protein bL36 family.

It is found in the plastid. The protein localises to the chloroplast. The protein is Large ribosomal subunit protein bL36c of Vitis vinifera (Grape).